Consider the following 644-residue polypeptide: DNA gyrase subunit B (644 aa).

In terms of domain architecture, Toprim spans 429-543 (CEIFLVEGDS…AGYVYIAQPP (115 aa)). 3 residues coordinate Mg(2+): E435, D508, and D510.

It belongs to the type II topoisomerase GyrB family. As to quaternary structure, heterotetramer, composed of two GyrA and two GyrB chains. In the heterotetramer, GyrA contains the active site tyrosine that forms a transient covalent intermediate with DNA, while GyrB binds cofactors and catalyzes ATP hydrolysis. Mg(2+) is required as a cofactor. It depends on Mn(2+) as a cofactor. Requires Ca(2+) as cofactor.

The protein localises to the cytoplasm. It carries out the reaction ATP-dependent breakage, passage and rejoining of double-stranded DNA.. Functionally, a type II topoisomerase that negatively supercoils closed circular double-stranded (ds) DNA in an ATP-dependent manner to modulate DNA topology and maintain chromosomes in an underwound state. Negative supercoiling favors strand separation, and DNA replication, transcription, recombination and repair, all of which involve strand separation. Also able to catalyze the interconversion of other topological isomers of dsDNA rings, including catenanes and knotted rings. Type II topoisomerases break and join 2 DNA strands simultaneously in an ATP-dependent manner. The sequence is that of DNA gyrase subunit B from Staphylococcus aureus (strain COL).